A 474-amino-acid polypeptide reads, in one-letter code: Eukaryotic translation initiation factor 3 subunit L (474 aa).

The 195-residue stretch at 255–449 (DAIRMFSHIL…DLDYALQGDL (195 aa)) folds into the PCI domain.

It belongs to the eIF-3 subunit L family. In terms of assembly, component of the eukaryotic translation initiation factor 3 (eIF-3) complex.

Its subcellular location is the cytoplasm. Its function is as follows. Component of the eukaryotic translation initiation factor 3 (eIF-3) complex, which is involved in protein synthesis of a specialized repertoire of mRNAs and, together with other initiation factors, stimulates binding of mRNA and methionyl-tRNAi to the 40S ribosome. The eIF-3 complex specifically targets and initiates translation of a subset of mRNAs involved in cell proliferation. In Chaetomium globosum (strain ATCC 6205 / CBS 148.51 / DSM 1962 / NBRC 6347 / NRRL 1970) (Soil fungus), this protein is Eukaryotic translation initiation factor 3 subunit L.